The following is a 117-amino-acid chain: MRWALAVLLAFLSPASQISSNLEGRTKSVTRLTGSSAEITCDLPGASTLYIHWYLHQEGKAPQCLLYYEPYYSRVVLESGITPGKYDTGSTRSNWNLRLQNLIKNDSGFYYCATWDR.

The signal sequence occupies residues 1 to 20; that stretch reads MRWALAVLLAFLSPASQISS. Residues 21–117 form the Ig-like domain; that stretch reads NLEGRTKSVT…GFYYCATWDR (97 aa). Cys-41 and Cys-112 form a disulfide bridge. A glycan (N-linked (GlcNAc...) asparagine) is linked at Asn-105.

As to quaternary structure, gamma-delta TR is a heterodimer composed of a gamma and delta chain; disulfide-linked. The gamma-delta TR is associated with the transmembrane signaling CD3 coreceptor proteins following the stoichiometry: a single gamma-delta TR heterodimer associates with one CD3D-CD3E heterodimer, one CD3G-CD3E heterodimer and one CD247 homodimer forming a stable octameric structure. Upon activation, gamma-delta TR complex associates with FCER1G to initiate intracellular signaling.

It is found in the cell membrane. In terms of biological role, probable non-functional open reading frame (ORF) of V region of the variable domain of T cell receptor (TR) gamma chain. Non-functional ORF generally cannot participate in the synthesis of a productive T cell receptor (TR) chain due to altered V-(D)-J or switch recombination and/or splicing site (at mRNA level) and/or conserved amino acid change (protein level). Gamma-delta TRs recognize a variety of self and foreign non-peptide antigens frequently expressed at the epithelial boundaries between the host and external environment, including endogenous lipids presented by MH-like protein CD1D and phosphoantigens presented by butyrophilin-like molecule BTN3A1. Upon antigen recognition induces rapid, innate-like immune responses involved in pathogen clearance and tissue repair. Binding of gamma-delta TR complex to antigen triggers phosphorylation of immunoreceptor tyrosine-based activation motifs (ITAMs) in the CD3 chains by the LCK and FYN kinases, allowing the recruitment, phosphorylation, and activation of ZAP70 that facilitates phosphorylation of the scaffolding proteins LCP2 and LAT. This lead to the formation of a supramolecular signalosome that recruits the phospholipase PLCG1, resulting in calcium mobilization and ERK activation, ultimately leading to T cell expansion and differentiation into effector cells. Gamma-delta TRs are produced through somatic rearrangement of a limited repertoire of variable (V), diversity (D), and joining (J) genes. The potential diversity of gamma-delta TRs is conferred by the unique ability to rearrange (D) genes in tandem and to utilize all three reading frames. The combinatorial diversity is considerably increased by the sequence exonuclease trimming and random nucleotide (N) region additions which occur during the V-(D)-J rearrangements. This chain is Probable non-functional T cell receptor gamma variable, found in Homo sapiens (Human).